A 238-amino-acid polypeptide reads, in one-letter code: Type III pantothenate kinase (238 aa).

6–13 provides a ligand contact to ATP; that stretch reads DSGNTRIK. Substrate-binding positions include Tyr90 and 97–100; that span reads GVDR. Asp99 (proton acceptor) is an active-site residue. Thr122 contributes to the ATP binding site. Thr172 provides a ligand contact to substrate.

This sequence belongs to the type III pantothenate kinase family. As to quaternary structure, homodimer. The cofactor is NH4(+). It depends on K(+) as a cofactor.

The protein resides in the cytoplasm. It catalyses the reaction (R)-pantothenate + ATP = (R)-4'-phosphopantothenate + ADP + H(+). Its pathway is cofactor biosynthesis; coenzyme A biosynthesis; CoA from (R)-pantothenate: step 1/5. Functionally, catalyzes the phosphorylation of pantothenate (Pan), the first step in CoA biosynthesis. The sequence is that of Type III pantothenate kinase from Dechloromonas aromatica (strain RCB).